A 171-amino-acid polypeptide reads, in one-letter code: Myosin regulatory light polypeptide 9 (171 aa).

Over residues 1-15 the composition is skewed to basic residues; that stretch reads MSSKRAKAKTTKKRP. Positions 1–21 are disordered; sequence MSSKRAKAKTTKKRPQSATSN. Ser-2 carries the N-acetylserine modification. At Thr-19 the chain carries Phosphothreonine; by MLCK, CIT and ROCK2. Ser-20 bears the Phosphoserine; by CDC42BP, CIT, MLCK, PAK1, ROCK1, ROCK2, DAPK1, DAPK2 and ZIPK/DAPK3 mark. 2 EF-hand domains span residues 29–64 and 98–133; these read SQIQ…LGKN and DPED…MGDR. Residues Asp-42, Asn-44, Asp-46, and Asp-53 each contribute to the Ca(2+) site.

Myosin is a hexamer of 2 heavy chains and 4 light chains: interacts with myosin heavy chain MYO19. Interacts with LUZP1; the interaction results in inhibition of phosphorylation of MYL9 by DAPK3. Post-translationally, phosphorylation increases the actin-activated myosin ATPase activity and thereby regulates the contractile activity. It is required to generate the driving force in the migration of the cells but not necessary for localization of myosin-2 at the leading edge. Phosphorylation is required for myotube formation. Phosphorylated by DAPK3; DAPK3-mediated phosphorylation is inhibited by LUZP1. In terms of tissue distribution, smooth muscle tissues and in some, but not all, nonmuscle cells.

The protein resides in the cytoplasm. Its subcellular location is the cytoskeleton. The protein localises to the cell cortex. Myosin regulatory subunit that plays an important role in regulation of both smooth muscle and nonmuscle cell contractile activity via its phosphorylation. Implicated in cytokinesis, receptor capping, and cell locomotion. In myoblasts, may regulate PIEZO1-dependent cortical actomyosin assembly involved in myotube formation. This chain is Myosin regulatory light polypeptide 9 (Myl9), found in Rattus norvegicus (Rat).